Reading from the N-terminus, the 375-residue chain is Putative prophage phiRv2 integrase (375 aa).

The 79-residue stretch at 75–153 (APFGEYAEGW…LLRAIMQTAL (79 aa)) folds into the Core-binding (CB) domain. In terms of domain architecture, Tyr recombinase spans 175 to 364 (HKIRPATLDE…AKGRDREIAA (190 aa)). Residues Arg209, His316, Arg319, and His342 contribute to the active site. Catalysis depends on Tyr351, which acts as the O-(3'-phospho-DNA)-tyrosine intermediate.

This sequence belongs to the 'phage' integrase family.

Functionally, integrase is necessary for integration of the phage into the host genome by site-specific recombination. In conjunction with excisionase, integrase is also necessary for excision of the prophage from the host genome. In Mycobacterium tuberculosis (strain CDC 1551 / Oshkosh), this protein is Putative prophage phiRv2 integrase.